The primary structure comprises 340 residues: Probable rRNA-processing protein EBP2 homolog (340 aa).

Over residues 1–10 (MVRKMNKLAK) the composition is skewed to basic residues. Disordered regions lie at residues 1–59 (MVRK…DDDE) and 245–340 (HGLD…RGRR). Composition is skewed to acidic residues over residues 23–37 (PESD…FDNA) and 46–59 (MDIE…DDDE). Residues 206-245 (QKEVLAAKNTEKKNLAEAVKKHKKGMKQQLEDMLNNVKRH) adopt a coiled-coil conformation. Composition is skewed to gly residues over residues 264-277 (GRGG…GRGG) and 318-333 (PRGG…GRGG).

This sequence belongs to the EBP2 family.

It localises to the nucleus. Its subcellular location is the nucleolus. Functionally, required for the processing of the 27S pre-rRNA. This chain is Probable rRNA-processing protein EBP2 homolog, found in Caenorhabditis elegans.